A 420-amino-acid chain; its full sequence is D-tagatose-1,6-bisphosphate aldolase subunit GatZ (420 aa).

This sequence belongs to the GatZ/KbaZ family. GatZ subfamily. In terms of assembly, forms a complex with GatY.

It participates in carbohydrate metabolism; D-tagatose 6-phosphate degradation; D-glyceraldehyde 3-phosphate and glycerone phosphate from D-tagatose 6-phosphate: step 2/2. Its function is as follows. Component of the tagatose-1,6-bisphosphate aldolase GatYZ that is required for full activity and stability of the Y subunit. Could have a chaperone-like function for the proper and stable folding of GatY. When expressed alone, GatZ does not show any aldolase activity. Is involved in the catabolism of galactitol. This is D-tagatose-1,6-bisphosphate aldolase subunit GatZ from Shigella flexneri serotype 5b (strain 8401).